The sequence spans 1372 residues: DNA-directed RNA polymerase subunit beta'' (1372 aa).

Zn(2+)-binding residues include Cys252, Cys321, Cys328, and Cys331.

This sequence belongs to the RNA polymerase beta' chain family. RpoC2 subfamily. In terms of assembly, in plastids the minimal PEP RNA polymerase catalytic core is composed of four subunits: alpha, beta, beta', and beta''. When a (nuclear-encoded) sigma factor is associated with the core the holoenzyme is formed, which can initiate transcription. Zn(2+) is required as a cofactor.

It localises to the plastid. The protein resides in the organellar chromatophore. The catalysed reaction is RNA(n) + a ribonucleoside 5'-triphosphate = RNA(n+1) + diphosphate. Functionally, DNA-dependent RNA polymerase catalyzes the transcription of DNA into RNA using the four ribonucleoside triphosphates as substrates. The chain is DNA-directed RNA polymerase subunit beta'' from Paulinella chromatophora.